A 124-amino-acid chain; its full sequence is Large ribosomal subunit protein eL33 (124 aa).

Alanine 2 is modified (N-acetylalanine).

The protein belongs to the eukaryotic ribosomal protein eL33 family.

This Caenorhabditis elegans protein is Large ribosomal subunit protein eL33.